A 298-amino-acid polypeptide reads, in one-letter code: Isochorismatase domain-containing protein 1 (298 aa).

At Tyr-160 the chain carries Phosphotyrosine. Position 279 is an N6-succinyllysine (Lys-279).

This sequence belongs to the isochorismatase family.

This chain is Isochorismatase domain-containing protein 1 (ISOC1), found in Bos taurus (Bovine).